A 260-amino-acid polypeptide reads, in one-letter code: Adenosylcobinamide-GDP ribazoletransferase (260 aa).

The next 7 helical transmembrane spans lie at 42-62 (PLAGGILGLLAGVALLIANAI), 64-84 (LPPLAAALIAIGALAAMTGAL), 117-137 (FAALTLVIWTSVKASLLMAII), 144-164 (YALLALIGTEAASRAGMLAFW), 192-212 (GLGLALLAIGFLPSGGMVALI), 214-234 (ALVLMTVVLFGFARLCMAKIG), and 240-260 (TLGAAQQIGSLAALIGLVMAL).

The protein belongs to the CobS family. The cofactor is Mg(2+).

It is found in the cell inner membrane. It carries out the reaction alpha-ribazole + adenosylcob(III)inamide-GDP = adenosylcob(III)alamin + GMP + H(+). It catalyses the reaction alpha-ribazole 5'-phosphate + adenosylcob(III)inamide-GDP = adenosylcob(III)alamin 5'-phosphate + GMP + H(+). It participates in cofactor biosynthesis; adenosylcobalamin biosynthesis; adenosylcobalamin from cob(II)yrinate a,c-diamide: step 7/7. Its function is as follows. Joins adenosylcobinamide-GDP and alpha-ribazole to generate adenosylcobalamin (Ado-cobalamin). Also synthesizes adenosylcobalamin 5'-phosphate from adenosylcobinamide-GDP and alpha-ribazole 5'-phosphate. This is Adenosylcobinamide-GDP ribazoletransferase from Brucella ovis (strain ATCC 25840 / 63/290 / NCTC 10512).